Reading from the N-terminus, the 732-residue chain is Polyadenylate-binding protein, cytoplasmic and nuclear (732 aa).

Polar residues predominate over residues 1 to 19; it reads MSAETSTTPAPAENTNGTP. Positions 1 to 26 are disordered; that stretch reads MSAETSTTPAPAENTNGTPDNAPAPE. 4 RRM domains span residues 42–120, 130–207, 223–300, and 326–454; these read ASLY…WSQR, GNVF…HHIS, TNIY…RAQK, and VNLY…LAQR. Disordered stretches follow at residues 357–413 and 706–732; these read VMRD…KKPL and MKNKSDEPAAEKPKEAAQEAPAEENKA. A compositionally biased stretch (basic and acidic residues) spans 371–412; that stretch reads SETKESANKENEKAAEGEKEPAAEEKEKEEKKEAEQKPEKKP. Residues 630 to 707 enclose the PABC domain; the sequence is VGVLTAQALS…ALSVYDEYMK (78 aa).

The protein belongs to the polyadenylate-binding protein type-1 family.

Its subcellular location is the cytoplasm. It is found in the nucleus. Functionally, binds the poly(A) tail of mRNA. Appears to be an important mediator of the multiple roles of the poly(A) tail in mRNA biogenesis, stability and translation. In the nucleus, involved in both mRNA cleavage and polyadenylation. Is also required for efficient mRNA export to the cytoplasm. Acts in concert with a poly(A)-specific nuclease (PAN) to affect poly(A) tail shortening, which may occur concomitantly with either nucleocytoplasmic mRNA transport or translational initiation. In the cytoplasm, stimulates translation initiation and regulates mRNA decay through translation termination-coupled poly(A) shortening, probably mediated by PAN. The sequence is that of Polyadenylate-binding protein, cytoplasmic and nuclear (pab1) from Emericella nidulans (strain FGSC A4 / ATCC 38163 / CBS 112.46 / NRRL 194 / M139) (Aspergillus nidulans).